Reading from the N-terminus, the 122-residue chain is Large ribosomal subunit protein uL14 (122 aa).

This sequence belongs to the universal ribosomal protein uL14 family. In terms of assembly, part of the 50S ribosomal subunit. Forms a cluster with proteins L3 and L19. In the 70S ribosome, L14 and L19 interact and together make contacts with the 16S rRNA in bridges B5 and B8.

Its function is as follows. Binds to 23S rRNA. Forms part of two intersubunit bridges in the 70S ribosome. The protein is Large ribosomal subunit protein uL14 of Leptothrix cholodnii (strain ATCC 51168 / LMG 8142 / SP-6) (Leptothrix discophora (strain SP-6)).